We begin with the raw amino-acid sequence, 155 residues long: SsrA-binding protein (155 aa).

The protein belongs to the SmpB family.

It is found in the cytoplasm. In terms of biological role, required for rescue of stalled ribosomes mediated by trans-translation. Binds to transfer-messenger RNA (tmRNA), required for stable association of tmRNA with ribosomes. tmRNA and SmpB together mimic tRNA shape, replacing the anticodon stem-loop with SmpB. tmRNA is encoded by the ssrA gene; the 2 termini fold to resemble tRNA(Ala) and it encodes a 'tag peptide', a short internal open reading frame. During trans-translation Ala-aminoacylated tmRNA acts like a tRNA, entering the A-site of stalled ribosomes, displacing the stalled mRNA. The ribosome then switches to translate the ORF on the tmRNA; the nascent peptide is terminated with the 'tag peptide' encoded by the tmRNA and targeted for degradation. The ribosome is freed to recommence translation, which seems to be the essential function of trans-translation. The protein is SsrA-binding protein of Chelativorans sp. (strain BNC1).